We begin with the raw amino-acid sequence, 336 residues long: F420-dependent glucose-6-phosphate dehydrogenase (336 aa).

Position 39 (D39) interacts with coenzyme F420-(gamma-Glu)n. The active-site Proton donor is H40. Coenzyme F420-(gamma-Glu)n is bound by residues T76 and 107–108 (TG). E109 serves as the catalytic Proton acceptor. Coenzyme F420-(gamma-Glu)n contacts are provided by residues N112, 177-178 (GG), and 180-181 (LV). Positions 195, 198, 259, and 283 each coordinate substrate.

It belongs to the F420-dependent glucose-6-phosphate dehydrogenase family. Homodimer.

The enzyme catalyses oxidized coenzyme F420-(gamma-L-Glu)(n) + D-glucose 6-phosphate + H(+) = 6-phospho-D-glucono-1,5-lactone + reduced coenzyme F420-(gamma-L-Glu)(n). Catalyzes the coenzyme F420-dependent oxidation of glucose 6-phosphate (G6P) to 6-phosphogluconolactone. This chain is F420-dependent glucose-6-phosphate dehydrogenase, found in Nocardia farcinica (strain IFM 10152).